We begin with the raw amino-acid sequence, 97 residues long: uncharacterized protein (97 aa).

This is an uncharacterized protein from Methanocaldococcus jannaschii (strain ATCC 43067 / DSM 2661 / JAL-1 / JCM 10045 / NBRC 100440) (Methanococcus jannaschii).